A 604-amino-acid chain; its full sequence is MHRYRTHTCGALRPSDVGQTVRLSGWCHRIRDHGGVLFIDLRDHYGLTQCVIDSDSPAFKAAETARSEWVIRIDGRVRTRPAGTENAELPTGSVEVYIDDLEVLGPAGELPLPVFGDQEYPEETRLKYRFLDLRREKLHANIMKRGAIIDSLRRRMREGGFFEFQTPILTASSPEGARDYLVPSRVHPGKFYALPQAPQQFKQLTMIAGFDRYFQIAPCFRDEDARADRSPGEFYQLDIEMSFVTQEDVFQAVEPVLRGVFEEFANGKRVTKEFPRITYADAMLKYGVDKPDLRNPLIIADVTDEFADDAVEFKAFKGVIKSGGVVRAIPATGAAGQPRSFFDKLNDWARSEGAPGLGYIVFEEEGGALTGKGPIAKFIPPEIQARIAQKAGAKAGDAVFFAAGTEAKAAALAGKARIRIGDELKLSDTDQFAFCWVVDFPMYEWNEEDKKIDFSHNPFSMPNYDRDAFLALGEEDAEKILGIKAFQYDIVCNGIELSSGAIRNHRPDVMEKAFAIAGYGRDVLEEKFGGMLNALRLGAPPHGGIAPGVDRIVMLLCEEPNIREVVLFPMNQRAEDLMMGAPAEATPKQLRELHIRLNLPEKKG.

Glu175 contacts L-aspartate. Positions 199-202 (QQFK) are aspartate. Positions 221 and 456 each coordinate L-aspartate. Position 221–223 (221–223 (RDE)) interacts with ATP. Glu496 is an ATP binding site. Position 503 (Arg503) interacts with L-aspartate. 548–551 (GVDR) is a binding site for ATP.

It belongs to the class-II aminoacyl-tRNA synthetase family. Type 1 subfamily. In terms of assembly, homodimer.

It localises to the cytoplasm. It catalyses the reaction tRNA(Asx) + L-aspartate + ATP = L-aspartyl-tRNA(Asx) + AMP + diphosphate. Aspartyl-tRNA synthetase with relaxed tRNA specificity since it is able to aspartylate not only its cognate tRNA(Asp) but also tRNA(Asn). Reaction proceeds in two steps: L-aspartate is first activated by ATP to form Asp-AMP and then transferred to the acceptor end of tRNA(Asp/Asn). This is Aspartate--tRNA(Asp/Asn) ligase from Methylorubrum populi (strain ATCC BAA-705 / NCIMB 13946 / BJ001) (Methylobacterium populi).